A 230-amino-acid polypeptide reads, in one-letter code: uncharacterized protein (230 aa).

This is an uncharacterized protein from Encephalitozoon cuniculi (strain GB-M1) (Microsporidian parasite).